Consider the following 550-residue polypeptide: MADVFEFELEGHESQASPQRHAYHYDNCTEIMEDDHMYSNVADGQISAPPPSSSYMEDPMMESIQLCASAINPPNVRVGPEDFQLLKVLGKGGYGKVFQVRKTTGSDNGQIFAMKVLQKATIVRNQKDTAHTKAERNILEAVKSPFICDLLYAFQTGGKLYLILEYLSGGELFMHLEREGMFMENVAKFYLSEIVVSLEHLHQQGIIYRDLKPENILLDAYGHVKLTDFGLCKEEIEGDQKTHTFCGTIEYMAPEILMRCGHGKAVDWWSLGALMFDMLTGGPPFTAENRRKTIDKILKGRLTLPAYLSNEARDLIKKLLKRHVDTRLGAGLSDAEEIKSHAFFKTTDWNLVYARQLEAPFKPNIENDEDTSLFDARFTKMTPVDSPCETNFSLNGDNPFVGFTYVAPSVLEMMNKGGHGGISVAHLASSMSRAGAAKSPRKPGDPETASILHGGHSNLFGHGPNSEAPQAFGYGIGSQMTTTTAGGAGIQQPYQSFSGGYPEDDAMDTSTPRASESRETTTGNGSTTTTRPSNVGSSASTPIPLPKRVM.

The region spanning 83-344 (FQLLKVLGKG…AEEIKSHAFF (262 aa)) is the Protein kinase domain. ATP contacts are provided by residues 89 to 97 (LGKGGYGKV) and Lys-115. Asp-210 (proton acceptor) is an active-site residue. The AGC-kinase C-terminal domain occupies 345–415 (KTTDWNLVYA…VAPSVLEMMN (71 aa)). Thr-404 is modified (phosphothreonine). 2 disordered regions span residues 433–466 (RAGA…GPNS) and 484–550 (TAGG…KRVM). Phosphoserine is present on Ser-439. Residues 520-534 (TTTGNGSTTTTRPSN) show a composition bias toward low complexity.

The protein belongs to the protein kinase superfamily. AGC Ser/Thr protein kinase family. S6 kinase subfamily. Mg(2+) is required as a cofactor. In terms of processing, may be phosphorylated on Thr-404 by let-363/TOR.

It localises to the cell projection. Its subcellular location is the axon. The protein resides in the perikaryon. It carries out the reaction L-seryl-[protein] + ATP = O-phospho-L-seryl-[protein] + ADP + H(+). It catalyses the reaction L-threonyl-[protein] + ATP = O-phospho-L-threonyl-[protein] + ADP + H(+). Serine/threonine-protein kinase which regulates mRNA translation. Negatively regulates lifespan and resistance to starvation, oxidative stress, protein aggregation and P.aeruginosa-mediated infection. May regulate these processes by preventing the activation of transcription factor hif-1. Required, probably downstream of let-363/TOR, for the establishment of the proper number of germline progenitors by promoting cell cycle progression and preventing differentiation during larval development. Regulates germ cell size. In addition required for sperm production and embryo viability. Involved in axon regeneration of PLM and ALM neurons by inhibiting growth cone formation early after axotomy and later by inhibiting axon extension. Functions in axon regeneration and lifespan probably by preventing aak-2/AMPK activation. Negatively regulates autophagy. The sequence is that of Ribosomal protein S6 kinase beta from Caenorhabditis elegans.